We begin with the raw amino-acid sequence, 429 residues long: Adenylosuccinate synthetase (429 aa).

GTP-binding positions include 12 to 18 (GDEGKGK) and 40 to 42 (GHT). Asp13 functions as the Proton acceptor in the catalytic mechanism. Asp13 and Gly40 together coordinate Mg(2+). Residues 13-16 (DEGK), 38-41 (NAGH), Thr129, Arg143, Gln223, Thr238, and Arg302 contribute to the IMP site. Residue His41 is the Proton donor of the active site. A substrate-binding site is contributed by 298–304 (TVTGRRR). GTP contacts are provided by residues Arg304, 330–332 (KLD), and 412–414 (STS).

The protein belongs to the adenylosuccinate synthetase family. Homodimer. The cofactor is Mg(2+).

Its subcellular location is the cytoplasm. The catalysed reaction is IMP + L-aspartate + GTP = N(6)-(1,2-dicarboxyethyl)-AMP + GDP + phosphate + 2 H(+). Its pathway is purine metabolism; AMP biosynthesis via de novo pathway; AMP from IMP: step 1/2. Its function is as follows. Plays an important role in the de novo pathway of purine nucleotide biosynthesis. Catalyzes the first committed step in the biosynthesis of AMP from IMP. The polypeptide is Adenylosuccinate synthetase (Granulibacter bethesdensis (strain ATCC BAA-1260 / CGDNIH1)).